The chain runs to 133 residues: MKTFPVSIVTPDGPVYEKEVEMVSVKAESGEMGILPGHIPTVAPLKISAVRLKNGGHTDYVAVSGGFIEVRPDKVTVLSSSAEEANHIDIHRANESKRRAEQRMQDKQAHVDFRRAEMALQRAVNRLNVSDMK.

Belongs to the ATPase epsilon chain family. F-type ATPases have 2 components, CF(1) - the catalytic core - and CF(0) - the membrane proton channel. CF(1) has five subunits: alpha(3), beta(3), gamma(1), delta(1), epsilon(1). CF(0) has three main subunits: a, b and c.

Its subcellular location is the cell membrane. Its function is as follows. Produces ATP from ADP in the presence of a proton gradient across the membrane. The chain is ATP synthase epsilon chain from Bacillus mycoides (strain KBAB4) (Bacillus weihenstephanensis).